A 146-amino-acid chain; its full sequence is Ribonuclease H (146 aa).

Positions 1–141 (MKHVDIFTDG…ADELARKGME (141 aa)) constitute an RNase H type-1 domain. Asp9, Glu47, Asp69, and Asp133 together coordinate Mg(2+). The tract at residues 123–146 (HAGHPENERADELARKGMEPFKRR) is disordered. The segment covering 125–146 (GHPENERADELARKGMEPFKRR) has biased composition (basic and acidic residues).

Belongs to the RNase H family. As to quaternary structure, monomer. Mg(2+) is required as a cofactor.

It localises to the cytoplasm. The catalysed reaction is Endonucleolytic cleavage to 5'-phosphomonoester.. Its function is as follows. Endonuclease that specifically degrades the RNA of RNA-DNA hybrids. This chain is Ribonuclease H, found in Agrobacterium fabrum (strain C58 / ATCC 33970) (Agrobacterium tumefaciens (strain C58)).